The sequence spans 180 residues: F17 fimbrial protein (180 aa).

The N-terminal stretch at M1 to A21 is a signal peptide. C37 and C77 are joined by a disulfide.

Belongs to the fimbrial protein family.

The protein resides in the fimbrium. Functionally, fimbriae (also called pili), polar filaments radiating from the surface of the bacterium to a length of 0.5-1.5 micrometers and numbering 100-300 per cell, enable bacteria to colonize the epithelium of specific host organs. The chain is F17 fimbrial protein (F17a-A) from Escherichia coli.